Reading from the N-terminus, the 539-residue chain is Protein lin-14 (539 aa).

Disordered regions lie at residues 162–230 and 262–293; these read PTLP…SNHS and ETAP…PRKP. 2 stretches are compositionally biased toward polar residues: residues 163–183 and 193–214; these read TLPN…GTDD and SVDS…NQNI. Residues 274-284 show a composition bias toward low complexity; it reads NGTTNGTAKAG. The interval 296–440 is involved in sequence-specific DNA-binding; that stretch reads DDIVKIVRNQ…CRRVRHAKKT (145 aa).

In terms of processing, cleaved by caspase ced-3 in vitro. As to expression, high levels in hypodermal, intestinal, body wall muscle, nerve ring, and ventral nerve cord cells of embryos and L1 animals.

The protein localises to the nucleus. Its function is as follows. Heterochronic protein which controls the choice of stage specific cell fates. Involved in the temporal progression of vulval fate patterning, possibly by inhibiting lin-12. Acts as a transcription factor involved in the stage-specific repression of various genes, including insulin/insulin-like growth factor gene ins-33 and neuropeptide-encoding gene nlp-45. Binds to the consensus sequence 5'-[CT]GGA[AG]-3' in the regulatory elements of target genes. Plays a role in governing the developmental timing of male tail tip morphogenesis. Plays a role in controlling the timing of seam cell development during the larval stages. Plays a role in promoting survival at high temperatures in larvae. Involved in maintenance of the architecture of the ventral nerve cord, perhaps acting via modulating expression of the immunoglobulin domain gene zig-4. In terms of biological role, may specify L2 and later cell fates, creating a temporal switch. May be involved in specifying L1 cell fates. The polypeptide is Protein lin-14 (Caenorhabditis elegans).